The sequence spans 640 residues: Dextranase (640 aa).

A signal peptide spans 1–32 (MPGTGLGRLAKHVTAAAAVFLISTGAVLPAQA).

This sequence belongs to the glycosyl hydrolase 49 family.

It is found in the secreted. The enzyme catalyses Endohydrolysis of (1-&gt;6)-alpha-D-glucosidic linkages in dextran.. In Arthrobacter globiformis, this protein is Dextranase.